The following is a 65-amino-acid chain: Large ribosomal subunit protein bL32 (65 aa).

It belongs to the bacterial ribosomal protein bL32 family.

The chain is Large ribosomal subunit protein bL32 from Phytoplasma australiense.